The chain runs to 561 residues: Putative cuticle collagen 145 (561 aa).

The N-terminal stretch at 1 to 30 (MEKILVTLSTGAASIAVLAVLFTIPSLYNT) is a signal peptide. Residues 100 to 112 (TCPPGPPGPPGQP) show a composition bias toward pro residues. Disordered regions lie at residues 100-134 (TCPPGPPGPPGQPGQPGTPGAPGPKGEDNTSTYAP), 148-271 (PQGP…PGGP), 367-398 (TCPPGPPGPPGQPGQPGTPGAPGPKGEDNTAT), and 422-540 (TGPA…GPGL). Triple-helical region stretches follow at residues 102 to 127 (PPGPPGPPGQPGQPGTPGAPGPKGED) and 153 to 276 (GPEG…LPGN). 2 stretches are compositionally biased toward low complexity: residues 164–209 (AGPD…PGQD) and 219–265 (APGA…DGQP). Residues 367–379 (TCPPGPPGPPGQP) are compositionally biased toward pro residues. Residues 413 to 544 (KCPQGPAGPT…PGGPGLPGND (132 aa)) are triple-helical region. 2 stretches are compositionally biased toward low complexity: residues 422–467 (TGPA…PGQD) and 486–532 (APGA…DGQP). In terms of domain architecture, Collagen-like spans 485-543 (GAPGAPGNAGPAGPAGQDGFPGQDGQPGPAGPAGQDGFPGNAGSDGQPGAPGGPGLPGN).

Belongs to the cuticular collagen family. As to quaternary structure, collagen polypeptide chains are complexed within the cuticle by disulfide bonds and other types of covalent cross-links.

Nematode cuticles are composed largely of collagen-like proteins. The cuticle functions both as an exoskeleton and as a barrier to protect the worm from its environment. The chain is Putative cuticle collagen 145 from Caenorhabditis briggsae.